The following is a 589-amino-acid chain: Serine/threonine-protein kinase STE7 homolog (589 aa).

A compositionally biased stretch (basic and acidic residues) spans 1–18; sequence MTRTTRIDTQEATKHKDL. Disordered regions lie at residues 1–162 and 185–232; these read MTRT…DPDN and RQHY…PASS. Low complexity predominate over residues 24 to 33; sequence PLSLSSNPNP. Positions 57–69 are enriched in polar residues; the sequence is VKSTSGSLRSSDM. The span at 92-121 shows a compositional bias: low complexity; it reads PTASSSATSTPTSNITGSSSASSIQFAQKS. Polar residues-rich tracts occupy residues 127–136 and 144–162; these read IVSQTLSRPS and SGYSSLNVNQSNRNVDPDN. The span at 185–203 shows a compositional bias: basic residues; it reads RQHYQNSHHHLPTTNRKRQ. Positions 206-220 are enriched in low complexity; that stretch reads ISSISPTKSSAASSP. Residues 249–565 form the Protein kinase domain; that stretch reads LLTLKQLGSG…QLLEDKEHFF (317 aa). Residues 255-263 and lysine 278 contribute to the ATP site; that span reads LGSGNSGSV. Aspartate 374 serves as the catalytic Proton acceptor. A Phosphoserine modification is found at serine 402. Phosphothreonine is present on threonine 408. The disordered stretch occupies residues 473-499; the sequence is IAAERNGQNSPSRSRKNKQKGNGYNSY.

This sequence belongs to the protein kinase superfamily. STE Ser/Thr protein kinase family. MAP kinase kinase subfamily.

The enzyme catalyses L-seryl-[protein] + ATP = O-phospho-L-seryl-[protein] + ADP + H(+). It carries out the reaction L-threonyl-[protein] + ATP = O-phospho-L-threonyl-[protein] + ADP + H(+). The catalysed reaction is L-tyrosyl-[protein] + ATP = O-phospho-L-tyrosyl-[protein] + ADP + H(+). The protein is Serine/threonine-protein kinase STE7 homolog (HST7) of Candida albicans (strain WO-1) (Yeast).